Consider the following 827-residue polypeptide: DNA ligase (827 aa).

NAD(+) contacts are provided by residues D45 to D49, S94 to L95, and E128. Residue K130 is the N6-AMP-lysine intermediate of the active site. NAD(+)-binding residues include R151, E188, K304, and K328. Residues C451, C454, C475, and C481 each coordinate Zn(2+). Residues A748–A827 enclose the BRCT domain.

The protein belongs to the NAD-dependent DNA ligase family. LigA subfamily. It depends on Mg(2+) as a cofactor. Requires Mn(2+) as cofactor.

The catalysed reaction is NAD(+) + (deoxyribonucleotide)n-3'-hydroxyl + 5'-phospho-(deoxyribonucleotide)m = (deoxyribonucleotide)n+m + AMP + beta-nicotinamide D-nucleotide.. DNA ligase that catalyzes the formation of phosphodiester linkages between 5'-phosphoryl and 3'-hydroxyl groups in double-stranded DNA using NAD as a coenzyme and as the energy source for the reaction. It is essential for DNA replication and repair of damaged DNA. In Methylobacterium sp. (strain 4-46), this protein is DNA ligase.